The primary structure comprises 432 residues: Glutamyl-tRNA reductase (432 aa).

Substrate-binding positions include 49–52, S109, 114–116, and Q120; these read TCNR and EGQ. C50 functions as the Nucleophile in the catalytic mechanism. 198–203 contributes to the NADP(+) binding site; the sequence is GAGRMS.

This sequence belongs to the glutamyl-tRNA reductase family. In terms of assembly, homodimer.

The enzyme catalyses (S)-4-amino-5-oxopentanoate + tRNA(Glu) + NADP(+) = L-glutamyl-tRNA(Glu) + NADPH + H(+). Its pathway is porphyrin-containing compound metabolism; protoporphyrin-IX biosynthesis; 5-aminolevulinate from L-glutamyl-tRNA(Glu): step 1/2. It functions in the pathway porphyrin-containing compound metabolism; chlorophyll biosynthesis. Its function is as follows. Catalyzes the NADPH-dependent reduction of glutamyl-tRNA(Glu) to glutamate 1-semialdehyde (GSA). This is Glutamyl-tRNA reductase from Parasynechococcus marenigrum (strain WH8102).